The sequence spans 43 residues: Jararafibrase-3 (43 aa).

Positions 10-43 constitute a C-type lectin domain; sequence MNGLYYKIFDELKAWKDAEMFCRKYKPGWHLASF.

Belongs to the true venom lectin family. Monomer. In terms of tissue distribution, expressed by the venom gland.

Its subcellular location is the secreted. Its activity is regulated as follows. Inhibited by 1,10-phenanthroline and EDTA. In terms of biological role, may have both metalloproteinase and lectin activities. Induces local hemorrhage in the skin of rats. Degrades type-IV collagen, gelatin, laminin and fibronectin. Has hemagglutinating activity on red blood cells. In Bothrops jararaca (Jararaca), this protein is Jararafibrase-3.